Consider the following 937-residue polypeptide: MASNNVAQFATELKMPADVLLTQLRDAGVEKSSTSDELSKADKDKLLDHLRRAHGVAPDGEKKKITLTRKETTEIKQADATGKSRTIQVEVRKKRTFVKRDESTPEEAPVKAAAPVIDEAEIERRAEEARRQAELIARQEADLREKQERLAKLEAEKEAQAKALKQAEQAEAEAQKADAAKPVEAKADESAQEEKKRVAAEESKKKAAQLAKDAAKEASEKAVATEAARKAVADEVAQIKAMMNAPRRAIKAPEPAAPVAAKPAEGTLHKPADKKAGEKKDEKKPAVTADKKSIKSANVSSTWQDDAKKRGAGIKTRGNTGGGRDGWRAGPKGRRPSHHDDRESNFQAPTEAVVKDVHVPETITVAELAHKMSVKASEVIKHLMKLGQMCTINQVLDQETAMILVEEMGHTAHAAKLDDPEALLEQGEEHADIEALPRAPVVTVMGHVDHGKTSLLDYIRRAKVASGEAGGITQHIGAYHVETPRGMITFLDTPGHEAFTAMRARGAKATDIVILVVAADDGVMPQTKEAIAHAKAAGVPLVVAINKIDKPGANMDRVKQELIAEQVVPEEYGGDSPFVPVSAKTGEGIDALLEQVLLQAEVLELKAPVDAPARGLVVEAKLDKGRGPVATILVQSGTLKRGDVVLAGSAYGRVRAMLDENGKSITEAGPSIPVEIQGLTEVPNAGEEVMVMADERKAREIGLFRQGKFRDVKLAKQQAAKLENMFENMGEGEVKNLPMIIKTDVQGSQEALVGSLQKLSTSEVRVQVVHAAVGGISESDVNLAVASKAVIIGFNTRADASARKLAEANGVDIRYYNIIYDAVDEIKAAMSGMLAPEKREQALGLVEIRQVILVSKVGAIAGCYVLEGVAKRGSSVRLLRDNVVVWTGELDSLKRFKDDVKEVKAGFECGLTLKNFNDIKEGDQLEVFEVQEIARTL.

2 disordered regions span residues 157 to 230 (KEAQ…AARK) and 250 to 346 (IKAP…ESNF). Basic and acidic residues predominate over residues 173-205 (EAQKADAAKPVEAKADESAQEEKKRVAAEESKK). Residues 252–265 (APEPAAPVAAKPAE) show a composition bias toward low complexity. The segment covering 267–293 (TLHKPADKKAGEKKDEKKPAVTADKKS) has biased composition (basic and acidic residues). The span at 295–304 (KSANVSSTWQ) shows a compositional bias: polar residues. Residues 437–606 (PRAPVVTVMG…LLQAEVLELK (170 aa)) form the tr-type G domain. Residues 446-453 (GHVDHGKT) form a G1 region. A GTP-binding site is contributed by 446–453 (GHVDHGKT). Positions 471-475 (GITQH) are G2. A G3 region spans residues 492-495 (DTPG). Residues 492–496 (DTPGH) and 546–549 (NKID) contribute to the GTP site. The segment at 546–549 (NKID) is G4. A G5 region spans residues 582 to 584 (SAK).

The protein belongs to the TRAFAC class translation factor GTPase superfamily. Classic translation factor GTPase family. IF-2 subfamily.

Its subcellular location is the cytoplasm. In terms of biological role, one of the essential components for the initiation of protein synthesis. Protects formylmethionyl-tRNA from spontaneous hydrolysis and promotes its binding to the 30S ribosomal subunits. Also involved in the hydrolysis of GTP during the formation of the 70S ribosomal complex. The protein is Translation initiation factor IF-2 of Janthinobacterium sp. (strain Marseille) (Minibacterium massiliensis).